The following is a 334-amino-acid chain: MAILVTGGAGYIGSHTVLFLLEQGEQVIVLDNLQKGHAGALSDVTFYHGDIRDDQLLDTIFTTHSIDTVIHFAANSLVGESVKQPIEYYENNVIGTHTLLKKMLEHDVKKIVFSSTAATYGEPVQIPIQESDPTIPTNPYGETKLAIEKMFHWCQEAYGLQYVCLRYFNAAGADPNGRIGEDHSPESHLIPIVLQVALGQRERVAIFGDDYQTEDGSCIRDYIHVMDLANAHYLACEHLRKDGQSGSFNLGNGKGFSVKEVIEVCRQVTGHPIPAEIAPRRSGDPASLIASSEKAQTILGWEPKYPSLETMVEHAWNWHKEHPHGYSTENKDKQ.

NAD(+) contacts are provided by residues 11–12 (YI), 31–36 (DNLQKG), 50–51 (DI), 72–76 (FAANS), asparagine 91, threonine 116, tyrosine 140, lysine 144, and phenylalanine 168. Substrate contacts are provided by threonine 116 and tyrosine 140. Residue tyrosine 140 is the Proton acceptor of the active site. Substrate contacts are provided by residues asparagine 169, 188–189 (HL), 205–207 (AIF), arginine 220, and 281–284 (RSGD).

It belongs to the NAD(P)-dependent epimerase/dehydratase family. Homodimer. NAD(+) is required as a cofactor.

The enzyme catalyses UDP-alpha-D-glucose = UDP-alpha-D-galactose. It participates in carbohydrate metabolism; galactose metabolism. In terms of biological role, involved in the metabolism of galactose. Catalyzes the conversion of UDP-galactose (UDP-Gal) to UDP-glucose (UDP-Glc) through a mechanism involving the transient reduction of NAD. This is UDP-glucose 4-epimerase (galE) from Halalkalibacterium halodurans (strain ATCC BAA-125 / DSM 18197 / FERM 7344 / JCM 9153 / C-125) (Bacillus halodurans).